A 363-amino-acid polypeptide reads, in one-letter code: 3-dehydroquinate synthase (363 aa).

Residues 70–75 (SGETSK), 104–108 (GVIGD), 128–129 (TT), Lys-141, Lys-150, and 168–171 (TLDT) each bind NAD(+). 3 residues coordinate Zn(2+): Glu-183, His-245, and His-262.

This sequence belongs to the sugar phosphate cyclases superfamily. Dehydroquinate synthase family. Co(2+) is required as a cofactor. It depends on Zn(2+) as a cofactor. The cofactor is NAD(+).

It is found in the cytoplasm. The enzyme catalyses 7-phospho-2-dehydro-3-deoxy-D-arabino-heptonate = 3-dehydroquinate + phosphate. It functions in the pathway metabolic intermediate biosynthesis; chorismate biosynthesis; chorismate from D-erythrose 4-phosphate and phosphoenolpyruvate: step 2/7. Catalyzes the conversion of 3-deoxy-D-arabino-heptulosonate 7-phosphate (DAHP) to dehydroquinate (DHQ). The protein is 3-dehydroquinate synthase of Alkaliphilus oremlandii (strain OhILAs) (Clostridium oremlandii (strain OhILAs)).